The sequence spans 272 residues: ATP phosphoribosyltransferase regulatory subunit (272 aa).

It belongs to the class-II aminoacyl-tRNA synthetase family. HisZ subfamily. As to quaternary structure, heteromultimer composed of HisG and HisZ subunits.

It is found in the cytoplasm. The protein operates within amino-acid biosynthesis; L-histidine biosynthesis; L-histidine from 5-phospho-alpha-D-ribose 1-diphosphate: step 1/9. Functionally, required for the first step of histidine biosynthesis. May allow the feedback regulation of ATP phosphoribosyltransferase activity by histidine. This is ATP phosphoribosyltransferase regulatory subunit from Staphylococcus aureus (strain USA300).